The chain runs to 410 residues: Translation initiation factor 2 subunit gamma (410 aa).

A tr-type G domain is found at 6–203 (QSEVNIGMVG…AIQEFIPTPE (198 aa)). The G1 stretch occupies residues 15–22 (GHVDHGKT). Mg(2+) contacts are provided by aspartate 18, threonine 22, glycine 43, and serine 45. Residue 18–23 (DHGKTS) participates in GTP binding. Residues 43–47 (GISIR) are G2. Residues cysteine 58, cysteine 61, cysteine 73, and cysteine 76 each contribute to the Zn(2+) site. The segment at 90 to 93 (DAPG) is G3. Residues 146–149 (NKID) and 181–183 (SAH) contribute to the GTP site. The G4 stretch occupies residues 146–149 (NKID). A G5 region spans residues 181-183 (SAH).

This sequence belongs to the TRAFAC class translation factor GTPase superfamily. Classic translation factor GTPase family. EIF2G subfamily. As to quaternary structure, heterotrimer composed of an alpha, a beta and a gamma chain. It depends on Mg(2+) as a cofactor.

The enzyme catalyses GTP + H2O = GDP + phosphate + H(+). Functionally, eIF-2 functions in the early steps of protein synthesis by forming a ternary complex with GTP and initiator tRNA. The sequence is that of Translation initiation factor 2 subunit gamma from Methanococcus maripaludis (strain C7 / ATCC BAA-1331).